Here is a 92-residue protein sequence, read N- to C-terminus: Ezrin (92 aa).

One can recognise an FERM domain in the interval 1 to 72; the sequence is QLFDQVVKGF…PDFVFYAPRR (72 aa). The residue at position 15 (lysine 15) is an N6-acetyllysine. Residues 42-92 are interaction with SCYL3; sequence EIRNISFNDKKFVIKPIDKKAPDFVFYAPRRKPDTIEVQQMKLQDFEQKTK.

Interacts with PALS1 and NHERF2. Found in a complex with EZR, PODXL and NHERF2. Interacts with MCC, PLEKHG6, PODXL, SCYL3/PACE1, NHERF1 and TMEM8B. Interacts (when phosphorylated) with FES/FPS. Interacts with dimeric S100P, the interaction may be activating through unmasking of F-actin binding sites. Identified in complexes that contain VIM, EZR, AHNAK, BFSP1, BFSP2, ANK2, PLEC, PRX and spectrin. Detected in a complex composed of at least EZR, AHNAK, PPL and PRX. Interacts with PDPN (via cytoplasmic domain); activates RHOA and promotes epithelial-mesenchymal transition. Interacts with SPN/CD43 cytoplasmic tail, CD44 and ICAM2. Interacts with CLIC5; may work together in a complex which also includes RDX and MYO6 to stabilize linkages between the plasma membrane and subjacent actin cytoskeleton at the base of stereocilia. Post-translationally, phosphorylated by tyrosine-protein kinases. Phosphorylation by ROCK2 suppresses the head-to-tail association of the N-terminal and C-terminal halves resulting in an opened conformation which is capable of actin and membrane-binding. In terms of processing, S-nitrosylation is induced by interferon-gamma and oxidatively-modified low-densitity lipoprotein (LDL(ox)) possibly implicating the iNOS-S100A8/9 transnitrosylase complex.

The protein resides in the apical cell membrane. The protein localises to the cell projection. It localises to the microvillus membrane. It is found in the ruffle membrane. Its subcellular location is the cytoplasm. The protein resides in the cell cortex. The protein localises to the cytoskeleton. It localises to the microvillus. A head-to-tail association, of the N-terminal and C-terminal halves results in a closed conformation (inactive form) which is incapable of actin or membrane-binding. Probably involved in connections of major cytoskeletal structures to the plasma membrane. In epithelial cells, required for the formation of microvilli and membrane ruffles on the apical pole. Along with PLEKHG6, required for normal macropinocytosis. In Mesocricetus auratus (Golden hamster), this protein is Ezrin.